The following is a 367-amino-acid chain: Apolipoprotein A-V (367 aa).

Positions 1–20 are cleaved as a signal peptide; that stretch reads MVAVLTWALALLSAFATAQT. S56 is subject to Phosphoserine.

This sequence belongs to the apolipoprotein A1/A4/E family. In terms of assembly, interacts with GPIHBP1. Interacts with SORL1; this interaction leads to APOA5 internalization and sorting either to lysosomes and degradation, or to the trans-Golgi network. Phosphorylated by FAM20C in the extracellular medium.

It is found in the secreted. It localises to the early endosome. The protein localises to the late endosome. Its subcellular location is the golgi apparatus. The protein resides in the trans-Golgi network. Functionally, minor apolipoprotein mainly associated with HDL and to a lesser extent with VLDL. May also be associated with chylomicrons. Important determinant of plasma triglyceride (TG) levels by both being a potent stimulator of apo-CII lipoprotein lipase (LPL) TG hydrolysis and an inhibitor of the hepatic VLDL-TG production rate (without affecting the VLDL-apoB production rate). Activates poorly lecithin:cholesterol acyltransferase (LCAT) and does not enhance efflux of cholesterol from macrophages. Binds heparin. The polypeptide is Apolipoprotein A-V (APOA5) (Phoca vitulina (Harbor seal)).